Reading from the N-terminus, the 420-residue chain is Serine hydroxymethyltransferase (420 aa).

Residues leucine 123 and 127 to 129 contribute to the (6S)-5,6,7,8-tetrahydrofolate site; that span reads GHL. N6-(pyridoxal phosphate)lysine is present on lysine 232. Residue 357-359 participates in (6S)-5,6,7,8-tetrahydrofolate binding; that stretch reads SPF.

The protein belongs to the SHMT family. Homodimer. Pyridoxal 5'-phosphate serves as cofactor.

It localises to the cytoplasm. The enzyme catalyses (6R)-5,10-methylene-5,6,7,8-tetrahydrofolate + glycine + H2O = (6S)-5,6,7,8-tetrahydrofolate + L-serine. The protein operates within one-carbon metabolism; tetrahydrofolate interconversion. It functions in the pathway amino-acid biosynthesis; glycine biosynthesis; glycine from L-serine: step 1/1. Catalyzes the reversible interconversion of serine and glycine with tetrahydrofolate (THF) serving as the one-carbon carrier. This reaction serves as the major source of one-carbon groups required for the biosynthesis of purines, thymidylate, methionine, and other important biomolecules. Also exhibits THF-independent aldolase activity toward beta-hydroxyamino acids, producing glycine and aldehydes, via a retro-aldol mechanism. This chain is Serine hydroxymethyltransferase, found in Streptococcus pyogenes serotype M12 (strain MGAS2096).